A 372-amino-acid chain; its full sequence is 3-galactosyl-N-acetylglucosaminide 4-alpha-L-fucosyltransferase FUT3 (372 aa).

Residues 1 to 15 (MDPLGAAKPQWPWRR) lie on the Cytoplasmic side of the membrane. The chain crosses the membrane as a helical; Signal-anchor for type II membrane protein span at residues 16–34 (CLAALLFQLLVAVCFFSYL). Residues 35–372 (RVSRDDATGS…TMRSIAAWFT (338 aa)) lie on the Lumenal side of the membrane. Residues 40–69 (DATGSPRPGLMAVEPVTGAPSGSSRQDTTP) are disordered. 2 N-linked (GlcNAc...) asparagine glycosylation sites follow: asparagine 165 and asparagine 196.

The protein belongs to the glycosyltransferase 10 family. Post-translationally, glycosylated.

It is found in the golgi apparatus. The protein localises to the golgi stack membrane. It carries out the reaction a beta-D-galactosyl-(1-&gt;3)-N-acetyl-beta-D-glucosaminyl derivative + GDP-beta-L-fucose = a beta-D-galactosyl-(1-&gt;3)-[alpha-L-fucosyl-(1-&gt;4)]-N-acetyl-beta-D-glucosaminyl derivative + GDP + H(+). It catalyses the reaction an N-acetyl-alpha-neuraminyl-(2-&gt;3)-beta-D-galactosyl-(1-&gt;4)-N-acetyl-beta-D-glucosaminyl derivative + GDP-beta-L-fucose = an alpha-Neu5Ac-(2-&gt;3)-beta-D-Gal-(1-&gt;4)-[alpha-L-Fuc-(1-&gt;3)]-beta-D-GlcNAc derivative + GDP + H(+). The catalysed reaction is a beta-D-galactosyl-(1-&gt;4)-N-acetyl-beta-D-glucosaminyl derivative + GDP-beta-L-fucose = a beta-D-galactosyl-(1-&gt;4)-[alpha-L-fucosyl-(1-&gt;3)]-N-acetyl-beta-D-glucosaminyl derivative + GDP + H(+). The enzyme catalyses an alpha-Neu5Ac-(2-&gt;3)-beta-D-Gal-(1-&gt;4)-beta-D-GlcNAc-(1-&gt;3)-beta-D-Gal-(1-&gt;4)-[alpha-L-Fuc-(1-&gt;3)]-beta-D-GlcNAc derivative + GDP-beta-L-fucose = an alpha-Neu5Ac-(2-&gt;3)-beta-D-Gal-(1-&gt;4)-[alpha-L-Fuc-(1-&gt;3)]-beta-D-GlcNAc-(1-&gt;3)-beta-D-Gal-(1-&gt;4)-[alpha-L-Fuc-(1-&gt;3)]-beta-D-GlcNAc derivative + GDP + H(+). It carries out the reaction Lc4Cer + GDP-beta-L-fucose = a lactoside III(4)-a-Fuc-Lc4Cer + GDP + H(+). It catalyses the reaction a beta-D-Gal-(1-&gt;3)-beta-D-GlcNAc-(1-&gt;3)-beta-D-Gal-(1-&gt;4)-beta-D-Glc-(1&lt;-&gt;1')-Cer(d18:1(4E)) + GDP-beta-L-fucose = a III(4)-a-Fuc-Lc4Cer(d18:1(4E)) + GDP + H(+). The catalysed reaction is N-acetyl-alpha-neuraminosyl-(2-&gt;3)-beta-D-galactosyl-(1-&gt;3)-[N-acetyl-alpha-neuraminosyl-(2-&gt;6)]-N-acetyl-beta-D-glucosaminyl-(1-&gt;3)-beta-D-galactosyl-(1-&gt;4)-beta-D-glucosyl-(1&lt;-&gt;1')-N-acyl-sphing-4-enine + GDP-beta-L-fucose = N-acetyl-alpha-neuraminosyl-(2-&gt;3)-beta-D-galactosyl-(1-&gt;3)-alpha-L-fucosyl-(1-&gt;4)-[N-acetyl-alpha-neuraminosyl-(2-&gt;6)-N-acetyl-beta-D-glucosaminyl-(1-&gt;3)]-beta-D-galactosyl-(1-&gt;4)-beta-D-glucosyl-(1&lt;-&gt;1')-N-acyl-sphing-4-enine + GDP + H(+). The enzyme catalyses N-acetyl-alpha-neuraminosyl-(2-&gt;3)-beta-D-galactosyl-(1-&gt;3)-N-acetyl-beta-D-glucosaminyl-(1-&gt;3)-beta-D-galactosyl-(1-&gt;4)-beta-D-glucosyl-(1&lt;-&gt;1')-N-acyl-sphing-4-enine + GDP-beta-L-fucose = N-acetyl-alpha-neuraminosyl-(2-&gt;3)-beta-D-galactosyl-(1-&gt;3)-alpha-L-fucosyl-(1-&gt;4)-[N-acetyl-beta-D-glucosaminyl-(1-&gt;3)]-beta-D-galactosyl-(1-&gt;4)-beta-D-glucosyl-(1&lt;-&gt;1')-N-acyl-sphing-4-enine + GDP + H(+). It carries out the reaction beta-D-galactosyl-(1-&gt;3)-N-acetyl-D-glucosamine + GDP-beta-L-fucose = beta-D-galactosyl-(1-&gt;3)-[alpha-L-fucosyl-(1-&gt;4)]-N-acetyl-D-glucosamine + GDP + H(+). It catalyses the reaction alpha-L-Fuc-(1-&gt;2)-beta-D-Gal-(1-&gt;3)-D-GlcNAc + GDP-beta-L-fucose = alpha-L-Fuc-(1-&gt;2)-beta-D-Gal-(1-&gt;3)-[alpha-L-Fuc-(1-&gt;4)]-D-GlcNAc + GDP + H(+). The catalysed reaction is alpha-L-Fuc-(1-&gt;2)-beta-D-Gal-(1-&gt;4)-D-GlcNAc + GDP-beta-L-fucose = alpha-L-Fuc-(1-&gt;2)-beta-D-Gal-(1-&gt;4)-[alpha-L-Fuc-(1-&gt;3)]-D-GlcNAc + GDP + H(+). The enzyme catalyses beta-D-galactosyl-(1-&gt;4)-N-acetyl-D-glucosamine + GDP-beta-L-fucose = beta-D-galactosyl-(1-&gt;4)-[alpha-L-fucosyl-(1-&gt;3)]-N-acetyl-D-glucosamine + GDP + H(+). It carries out the reaction lactose + GDP-beta-L-fucose = beta-D-galactosyl-(1-&gt;4)-[alpha-L-fucosyl-(1-&gt;3)]-D-glucose + GDP + H(+). It catalyses the reaction an alpha-Neu5Ac-(2-&gt;3)-beta-D-Gal-(1-&gt;3)-D-GlcNAc derivative + GDP-beta-L-fucose = an alpha-Neu5Ac-(2-&gt;3)-beta-D-Gal-(1-&gt;3)-[alpha-L-Fuc-(1-&gt;4)]-beta-D-GlcNAc derivative + GDP + H(+). The protein operates within protein modification; protein glycosylation. Catalyzes the transfer of L-fucose, from a guanosine diphosphate-beta-L-fucose, to both the subterminal N-acetyl glucosamine (GlcNAc) of type 1 chain (beta-D-Gal-(1-&gt;3)-beta-D-GlcNAc) glycolipids and oligosaccharides via an alpha(1,4) linkage, and the subterminal glucose (Glc) or GlcNAc of type 2 chain (beta-D-Gal-(1-&gt;4)-beta-D-GlcNAc) oligosaccharides via an alpha(1,3) linkage, independently of the presence of terminal alpha-L-fucosyl-(1,2) moieties on the terminal galactose of these acceptors and participates in the blood groups Lewis determination and expression of Lewis a (Le(a)), lewis b (Le(b)), Lewis x/SSEA-1 (Le(x)) and lewis y (Le(y)) antigens. Also catalyzes the transfer of L-fucose to subterminal GlcNAc of sialyl- and disialyl-lactotetraosylceramide to produce sialyl Lewis a (sLe(a)) and disialyl Lewis a via an alpha(1,4) linkage and therefore may regulate cell surface sialyl Lewis a expression and consequently regulates adhesive properties to E-selectin, cell proliferation and migration. Catalyzes the transfer of an L-fucose to 3'-sialyl-N-acetyllactosamine by an alpha(1,3) linkage, which allows the formation of sialyl-Lewis x structure and therefore may regulate the sialyl-Lewis x surface antigen expression and consequently adhesive properties to E-selectin. Prefers type 1 chain over type 2 acceptors. Type 1 tetrasaccharide is a better acceptor than type 1 disaccharide suggesting that a beta anomeric configuration of GlcNAc in the substrate is preferred. Lewis-positive (Le(+)) individuals have an active enzyme while Lewis-negative (Le(-)) individuals have an inactive enzyme. This chain is 3-galactosyl-N-acetylglucosaminide 4-alpha-L-fucosyltransferase FUT3, found in Pan troglodytes (Chimpanzee).